A 342-amino-acid polypeptide reads, in one-letter code: Isopentenyl-diphosphate delta-isomerase (342 aa).

11–12 is a substrate binding site; sequence RK. Residues serine 68, 69–71, serine 99, and asparagine 127 each bind FMN; that span reads SMT. 99-101 provides a ligand contact to substrate; that stretch reads SMR. Glutamine 162 provides a ligand contact to substrate. Glutamate 163 serves as a coordination point for Mg(2+). Residues lysine 194, threonine 224, 274 to 276, and 295 to 296 each bind FMN; these read GLK and AG.

Belongs to the IPP isomerase type 2 family. In terms of assembly, homooctamer. Dimer of tetramers. It depends on FMN as a cofactor. The cofactor is NADPH. Mg(2+) serves as cofactor.

The protein localises to the cytoplasm. The enzyme catalyses isopentenyl diphosphate = dimethylallyl diphosphate. In terms of biological role, involved in the biosynthesis of isoprenoids. Catalyzes the 1,3-allylic rearrangement of the homoallylic substrate isopentenyl (IPP) to its allylic isomer, dimethylallyl diphosphate (DMAPP). In Rickettsia rickettsii (strain Iowa), this protein is Isopentenyl-diphosphate delta-isomerase.